Reading from the N-terminus, the 681-residue chain is Mitosis inhibitor nif1 (681 aa).

Positions 22-43 (LNKKDGNDDDKAEHSKRSGYHG) are disordered. The segment covering 23–37 (NKKDGNDDDKAEHSK) has biased composition (basic and acidic residues). Residue Ser70 is modified to Phosphoserine. 2 disordered regions span residues 80 to 104 (TTSGSSSDLLNIESPASPAEASSPF) and 182 to 324 (YYHE…SSRQ). A compositionally biased stretch (low complexity) spans 92-103 (ESPASPAEASSP). Polar residues predominate over residues 191 to 203 (TASNTSPTPNSIK). A Phosphoserine modification is found at Ser196. The span at 238 to 278 (SSGDSTPLSGSSSSKGMLMSMSTSENHSLSSNPELSNSNLL) shows a compositional bias: low complexity. Basic and acidic residues predominate over residues 296–306 (SSKEPDKEHST). 2 Sel1-like repeats span residues 547-582 (ALILYELGVCFMHGWGITRDRYLALHLIKLSGAWGD) and 583-618 (ADAQFEAGLQMSLGAVSDKDSHMAAYYYRLAGFQGI).

The protein localises to the cytoplasm. Functions as a negative regulator of mitosis. It interacts with the C-terminal of nim1, thereby inhibiting its kinase activity which phosphorylates wee1. The chain is Mitosis inhibitor nif1 (nif1) from Schizosaccharomyces pombe (strain 972 / ATCC 24843) (Fission yeast).